The chain runs to 152 residues: Natriuretic peptides A (152 aa).

An N-terminal signal peptide occupies residues 1–24; the sequence is MGSSAITVSFLLFLAFQLPGQTGA. Propeptides lie at residues 25 to 122 and 92 to 102; these read NPVY…TAPR and EGGVLGRGPWE. The segment at 58-101 is disordered; sequence PSQVLSEQNEEAGAPLSPLSEMPPWMGEVNPAQREGGVLGRGPW. Residue Ser128 is modified to Phosphoserine. Cysteines 129 and 145 form a disulfide. Residues 146–150 are important for degradation of atrial natriuretic peptide by IDE; sequence NSFRY.

This sequence belongs to the natriuretic peptide family. As to quaternary structure, homodimer; disulfide-linked antiparallel dimer. Post-translationally, the precursor molecule is proteolytically cleaved by CORIN at Arg-122 to produce the atrial natriuretic peptide. Undergoes further proteolytic cleavage by unknown proteases to give rise to long-acting natriuretic peptide, vessel dilator and kaliuretic peptide. Additional processing gives rise to the auriculin and atriopeptin peptides. In the kidneys, alternative processing by an unknown protease results in the peptide urodilatin. Cleavage by MME initiates degradation of the factor and thereby regulates its activity. Degradation by IDE results in reduced activation of NPR1 (in vitro). During IDE degradation, the resulting products can temporarily stimulate NPR2 to produce cGMP, before the fragments are completely degraded and inactivated by IDE (in vitro). In terms of processing, degraded by IDE. Post-translationally, phosphorylation on Ser-128 decreases vasorelaxant activity.

It localises to the secreted. The protein resides in the perikaryon. Its subcellular location is the cell projection. Hormone that plays a key role in mediating cardio-renal homeostasis, and is involved in vascular remodeling and regulating energy metabolism. Acts by specifically binding and stimulating NPR1 to produce cGMP, which in turn activates effector proteins, such as PRKG1, that drive various biological responses. Regulates vasodilation, natriuresis, diuresis and aldosterone synthesis and is therefore essential for regulating blood pressure, controlling the extracellular fluid volume and maintaining the fluid-electrolyte balance. Also involved in inhibiting cardiac remodeling and cardiac hypertrophy by inducing cardiomyocyte apoptosis and attenuating the growth of cardiomyocytes and fibroblasts. Plays a role in female pregnancy by promoting trophoblast invasion and spiral artery remodeling in uterus, and thus prevents pregnancy-induced hypertension. In adipose tissue, acts in various cGMP- and PKG-dependent pathways to regulate lipid metabolism and energy homeostasis. This includes up-regulating lipid metabolism and mitochondrial oxygen utilization by activating the AMP-activated protein kinase (AMPK), and increasing energy expenditure by acting via MAPK11 to promote the UCP1-dependent thermogenesis of brown adipose tissue. Binds the clearance receptor NPR3 which removes the hormone from circulation. Its function is as follows. May have a role in cardio-renal homeostasis through regulation of natriuresis, diuresis, vasodilation, and inhibiting aldosterone synthesis. In vitro, promotes the production of cGMP and induces vasodilation. May promote natriuresis, at least in part, by enhancing prostaglandin E2 synthesis resulting in the inhibition of renal Na+-K+-ATPase. However reports on the involvement of this peptide in mammal blood volume and blood pressure homeostasis are conflicting; according to a report, in vivo it is not sufficient to activate cGMP and does not inhibit collecting duct transport nor effect diuresis and natriuresis. Appears to bind to specific receptors that are distinct from the receptors bound by atrial natriuretic peptide and vessel dilator. Possibly enhances protein excretion in urine by decreasing proximal tubular protein reabsorption. Functionally, may have a role in cardio-renal homeostasis through regulation of natriuresis, diuresis, and vasodilation. In vitro, promotes the production of cGMP and induces vasodilation. May promote natriuresis, at least in part, by enhancing prostaglandin E2 synthesis resulting in the inhibition of renal Na+-K+-ATPase. However reports on the involvement of this peptide in mammal blood volume and blood pressure homeostasis are conflicting; according to a report it is not sufficient to activate cGMP and does not inhibit collecting duct transport nor effect diuresis and natriuresis. Appears to bind to specific receptors that are distinct from the receptors bound by the atrial natriuretic and long-acting natriuretic peptides. Possibly functions in protein excretion in urine by maintaining the integrity of the proximal tubules and enhancing protein excretion by decreasing proximal tubular protein reabsorption. In terms of biological role, may have a role in cardio-renal homeostasis through regulation of diuresis and inhibiting aldosterone synthesis. In vitro, promotes the production of cGMP and induces vasodilation. May promote natriuresis, at least in part, by enhancing prostaglandin E2 synthesis resulting in the inhibition of renal Na+-K+-ATPase. May have a role in potassium excretion but not sodium excretion (natriuresis). Possibly enhances protein excretion in urine by decreasing proximal tubular protein reabsorption. Hormone produced in the kidneys that appears to be important for maintaining cardio-renal homeostasis. Mediates vasodilation, natriuresis and diuresis primarily in the renal system, in order to maintain the extracellular fluid volume and control the fluid-electrolyte balance. Specifically binds and stimulates cGMP production by renal transmembrane receptors, likely NPR1. Urodilatin not ANP, may be the natriuretic peptide responsible for the regulation of sodium and water homeostasis in the kidney. Its function is as follows. May have a role in cardio-renal homeostasis through regulation of natriuresis and vasodilation. In vivo promotes natriuresis and in vitro, vasodilates renal artery strips. Functionally, may have a role in cardio-renal homeostasis through regulation of regulation of natriuresis and vasodilation. In vivo promotes natriuresis. In vitro, vasodilates intestinal smooth muscle but not smooth muscle strips. In terms of biological role, may have a role in cardio-renal homeostasis through regulation of natriuresis and vasodilation. In vivo promotes natriuresis. In vitro, selectively vasodilates intestinal and vascular smooth muscle strips. May have a role in cardio-renal homeostasis through regulation of natriuresis and vasodilation. In vivo promotes natriuresis. In vitro, selectively vasodilates intestinal smooth muscle but not vascular smooth muscle strips. The polypeptide is Natriuretic peptides A (NPPA) (Bos taurus (Bovine)).